We begin with the raw amino-acid sequence, 901 residues long: HTH-type transcriptional regulator MalT (901 aa).

39-46 (SPAGYGKT) lines the ATP pocket. The region spanning 829-894 (ELIRTSPLTQ…AAVQHAQKLL (66 aa)) is the HTH luxR-type domain. A DNA-binding region (H-T-H motif) is located at residues 853–872 (NEQIAGELEVAATTIKTHIR).

This sequence belongs to the MalT family. Monomer in solution. Oligomerizes to an active state in the presence of the positive effectors ATP and maltotriose.

Activated by ATP and maltotriose, which are both required for DNA binding. Functionally, positively regulates the transcription of the maltose regulon whose gene products are responsible for uptake and catabolism of malto-oligosaccharides. Specifically binds to the promoter region of its target genes, recognizing a short DNA motif called the MalT box. The sequence is that of HTH-type transcriptional regulator MalT from Shigella boydii serotype 4 (strain Sb227).